The primary structure comprises 464 residues: Divalent metal cation transporter MntH (464 aa).

11 helical membrane passes run 57-77 (ILIAVGYMDPGNWITSIAGGA), 82-102 (SLLSVILISSLIAMLLQSMAA), 125-145 (GIILWLITESAIMATDVAEII), 157-177 (IPLVVGILITTADVLILLLLM), 186-206 (AIVATLVAVILLVFTYEVFLA), 229-249 (MLYLALGIVGATVMPHDLYLG), 281-301 (LTIAFIVNSLLLILGAALFFG), 321-341 (IVGAIASPMLSMLFAVALLSS), 376-396 (LLSVTPVLIFAIYYHGNEAKI), 399-419 (LLTLSQVFLSVALPFAIVPLV), and 443-463 (VATVVLVSLNIYLILQTVGVI).

The protein belongs to the NRAMP family.

It localises to the cell membrane. In terms of biological role, h(+)-stimulated, divalent metal cation uptake system. This chain is Divalent metal cation transporter MntH, found in Levilactobacillus brevis (Lactobacillus brevis).